The primary structure comprises 207 residues: B2 protein (207 aa).

The disordered stretch occupies residues 1–68 (MIDQEESNFN…FKTLPPAESL (68 aa)). Low complexity-rich tracts occupy residues 8-26 (NFNFNFNQPQQPQQQQFHG) and 35-52 (KNNNNNSESGNKNGGENK). Residues 72 to 204 (ETVGGYIFVC…AISLLDIFEE (133 aa)) form the DCD domain.

The polypeptide is B2 protein (Daucus carota (Wild carrot)).